The sequence spans 949 residues: MSFKPIDYLPYDFANRRHIGPSPAEMTQMLEVTGAANLDALMDDTLPAAIRQKEPLAFGKAMSEREVLEHLRRVASKNQVLTSLIGQGYYGTVTPPAIQRNILENPAWYTAYTPYQPEISQGRLEALLNFQTMVSDLTGLEVANASLLDEATACAEAMTMAQRVSKSKSKAFFVDRDCHPQNIAVMQTRAAPLGIEIIVGNPDKMDAEAVFGAIFQYPGTYGHVNDFTDHMAALHAHKAIGIVSADPLALTLLKEPGAMGADIAVGSTQRFGVPEGYGGPHAAYMACRDAYKRAMPGRIVGVSVDSHGHRAYRLSLQTREQHIRREKATSNVCTAQALLAVMASMYAVFHGPEGLRAIAQRIHRKAVRLAKGLEEAGFTVDPQAFFDTITVDVGPLQAAVMKSAVDEGINLRRVGETRVGISLNERCRPDTLEAVWRAFGITRADNDFRPDYRFPEEMLRTSDYLTHPIFHMNRAETEMMRYMRRLSDRDLALDRAMIPLGSCTMKLNSAAEMMPVSWRDFSLLHPFAPVDQAKGYTEMIDDLSAKLCQITGYDQISMQPNSGAQGEYAGLLSIAGYHRANGEAHRNICLIPMSAHGTNPASAQMVGWTVVPIKSADNGDIDMADFAAKAEQHAANLAGCMITYPSTHGVFEETVTEVTRITHQHGGQVYIDGANMNAMVGLSRPGDLGGDVSHLNLHKTFCIPHGGGGPGMGPIGVKSHLAPFLPGHEMTGGGEGAVSAAPFGSPSLLPISWAYCLMMGGDGLTQATRVAILNANYIAKRLEGAFDVLYRGPTGRVAHECVIDVRPFEKSAGVSVEDIAKRLIDCGFHAPTMSWPVAGTLMVEPTESETKAELDRFCDAMLAIRAEIADIEEGRMDAANNPLKNAPHTVDDLVSDWDRPYSRDQGCFPPGAFRVDKYWPPVNRVDNVFGDRHLVCTCPPMEDYAEAAE.

Lys-699 carries the post-translational modification N6-(pyridoxal phosphate)lysine.

Belongs to the GcvP family. As to quaternary structure, the glycine cleavage system is composed of four proteins: P, T, L and H. It depends on pyridoxal 5'-phosphate as a cofactor.

The catalysed reaction is N(6)-[(R)-lipoyl]-L-lysyl-[glycine-cleavage complex H protein] + glycine + H(+) = N(6)-[(R)-S(8)-aminomethyldihydrolipoyl]-L-lysyl-[glycine-cleavage complex H protein] + CO2. Functionally, the glycine cleavage system catalyzes the degradation of glycine. The P protein binds the alpha-amino group of glycine through its pyridoxal phosphate cofactor; CO(2) is released and the remaining methylamine moiety is then transferred to the lipoamide cofactor of the H protein. The polypeptide is Glycine dehydrogenase (decarboxylating) (Roseobacter denitrificans (strain ATCC 33942 / OCh 114) (Erythrobacter sp. (strain OCh 114))).